The following is a 506-amino-acid chain: Histidine ammonia-lyase (506 aa).

The segment at residues A143 to G145 is a cross-link (5-imidazolinone (Ala-Gly)). S144 is modified (2,3-didehydroalanine (Ser)).

It belongs to the PAL/histidase family. Contains an active site 4-methylidene-imidazol-5-one (MIO), which is formed autocatalytically by cyclization and dehydration of residues Ala-Ser-Gly.

Its subcellular location is the cytoplasm. It carries out the reaction L-histidine = trans-urocanate + NH4(+). It participates in amino-acid degradation; L-histidine degradation into L-glutamate; N-formimidoyl-L-glutamate from L-histidine: step 1/3. The chain is Histidine ammonia-lyase from Salmonella paratyphi A (strain ATCC 9150 / SARB42).